Reading from the N-terminus, the 214-residue chain is Orotate phosphoribosyltransferase (214 aa).

K26 is a 5-phospho-alpha-D-ribose 1-diphosphate binding site. 34-35 (FF) contacts orotate. Residues 72-73 (YK), R99, K100, K103, H105, and 124-132 (DDVITAGTA) each bind 5-phospho-alpha-D-ribose 1-diphosphate. Orotate-binding residues include T128 and R157.

This sequence belongs to the purine/pyrimidine phosphoribosyltransferase family. PyrE subfamily. In terms of assembly, homodimer. Mg(2+) is required as a cofactor.

It catalyses the reaction orotidine 5'-phosphate + diphosphate = orotate + 5-phospho-alpha-D-ribose 1-diphosphate. Its pathway is pyrimidine metabolism; UMP biosynthesis via de novo pathway; UMP from orotate: step 1/2. Its function is as follows. Catalyzes the transfer of a ribosyl phosphate group from 5-phosphoribose 1-diphosphate to orotate, leading to the formation of orotidine monophosphate (OMP). In Pseudomonas fluorescens (strain ATCC BAA-477 / NRRL B-23932 / Pf-5), this protein is Orotate phosphoribosyltransferase.